A 527-amino-acid polypeptide reads, in one-letter code: Peptide chain release factor 3 (527 aa).

Positions 9–278 constitute a tr-type G domain; it reads NKRRTFAIIS…GLTQWAPKPQ (270 aa). Residues 18–25, 86–90, and 140–143 contribute to the GTP site; these read SHPDAGKT, DTPGH, and NKLD.

Belongs to the TRAFAC class translation factor GTPase superfamily. Classic translation factor GTPase family. PrfC subfamily.

Its subcellular location is the cytoplasm. In terms of biological role, increases the formation of ribosomal termination complexes and stimulates activities of RF-1 and RF-2. It binds guanine nucleotides and has strong preference for UGA stop codons. It may interact directly with the ribosome. The stimulation of RF-1 and RF-2 is significantly reduced by GTP and GDP, but not by GMP. The protein is Peptide chain release factor 3 of Haemophilus influenzae (strain PittGG).